The primary structure comprises 310 residues: MSKIIFMGTPDFSAPILKALHEAHGVSLVITQPDKPVGRKRVLTPPPVKVMAESLGIEVYQPESMKSDEAFERVHALSPDLIVTAAFGQILPERVLDIPRLGCINVHASLLPKYRGGAPIHKAIINGEKYSGVTIMYMVKRLDAGDMIDSVQVPIEINDTVGTLHDKLSVAGTDLLLEVMPSVLSGTNNRTPQNDSEATFASNVSREEEYVTFDRTALEVHNHIRGLSPWPVAFANFDGKAMKLWASEIAEGSGAPGEIIQADKAGLVIATNDGAVRITSLQPAGKKRMDAASFVAGAKSQLVGMKFNEA.

109–112 serves as a coordination point for (6S)-5,6,7,8-tetrahydrofolate; the sequence is SLLP.

This sequence belongs to the Fmt family.

It catalyses the reaction L-methionyl-tRNA(fMet) + (6R)-10-formyltetrahydrofolate = N-formyl-L-methionyl-tRNA(fMet) + (6S)-5,6,7,8-tetrahydrofolate + H(+). In terms of biological role, attaches a formyl group to the free amino group of methionyl-tRNA(fMet). The formyl group appears to play a dual role in the initiator identity of N-formylmethionyl-tRNA by promoting its recognition by IF2 and preventing the misappropriation of this tRNA by the elongation apparatus. This chain is Methionyl-tRNA formyltransferase, found in Macrococcus caseolyticus (strain JCSC5402) (Macrococcoides caseolyticum).